The following is a 137-amino-acid chain: uncharacterized protein (137 aa).

This is an uncharacterized protein from Archaeoglobus fulgidus (strain ATCC 49558 / DSM 4304 / JCM 9628 / NBRC 100126 / VC-16).